A 585-amino-acid polypeptide reads, in one-letter code: Cytochrome P450 monooxygenase AOL_s00215g278 (585 aa).

Residue Cys-518 coordinates heme.

Belongs to the cytochrome P450 family. It depends on heme as a cofactor.

Its pathway is secondary metabolite biosynthesis; terpenoid biosynthesis. Cytochrome P450 monooxygenase; part of the gene cluster that mediates the biosynthesis of sesquiterpenyl epoxy-cyclohexenoids (SECs) such as anthrobotrisins and arthrosporols, metabolites that possess a novel hybrid carbon skeleton consisting of a polyketide-derived epoxycyclohexenol combined with a terpenoid-derived monocyclic sesquiterpenol substructure (PKS-PTS hybrid). The SEC pathway plays an important role for fungal soil colonization via decreasing fungal nematode-capturing ability. Within the pathway, the cytochrome P450 monooxygenase AOL_s00215g278 plays a role in the oxygenation of the phenol moiety, most likely in the epoxy formation. The pathway begins with the biosynthesis of 6-methylsalicylic acid (6-MSA), the first precursor of the polyketide-derived epoxycyclohexenol in arthrosporols, by the polyketide synthase (PKS) AOL_s00215g283 via condensation of 1 acetate and 3 malonate units. The 6-methylsalicylic acid decarboxylase AOL_s00215g281 then catalyzes the decarboxylation of 6-methylsalicylic acid to yield m-cresol. The cytochrome P450 monooxygenase AOL_s00215g282 further oxidizes m-cresol to yield toluquinol. With the assistance of the oxidoreductase AOL_s00215g277, the polyprenyl transferase AOL_s00215g276 catalyzes the farnesylation of toluquinol to produce farnesyl hydroquinone, the hybrid precursor for biosynthesis of SECs. Farnesyl hydroquinone undergoes epoxidation and then subsequent dehydrogenation to form farnesyl epoxy-quinone, the first and simplest SEC. The cytochrome P450 monooxygenase AOL_s00215g278 and the FAD-dependent monooxygenase AOL_s00215g279 might be involved in the oxygenation of the phenol moiety, most likely in the epoxy formation. The cytochrome P450 monooxygenases AOL_s00215g274 and AOL_s00215g280 are involved in specific regional ketone reductions at respectively C-4 and C-1 of farnesyl epoxy-quinone PubMed:33823587. This chain is Cytochrome P450 monooxygenase AOL_s00215g278, found in Arthrobotrys oligospora (strain ATCC 24927 / CBS 115.81 / DSM 1491) (Nematode-trapping fungus).